A 331-amino-acid chain; its full sequence is Ketol-acid reductoisomerase (NADP(+)) (331 aa).

The KARI N-terminal Rossmann domain maps to 2-182 (AQLFYDSDAD…GGTRAGILET (181 aa)). NADP(+) contacts are provided by residues 25-28 (YGSQ), serine 51, serine 53, and 83-86 (DEFQ). Histidine 108 is an active-site residue. Glycine 134 contacts NADP(+). In terms of domain architecture, KARI C-terminal knotted spans 183-328 (NFKEETETDL…KGLRSMFSWL (146 aa)). The Mg(2+) site is built by aspartate 191, glutamate 195, glutamate 227, and glutamate 231. Position 252 (serine 252) interacts with substrate.

This sequence belongs to the ketol-acid reductoisomerase family. Requires Mg(2+) as cofactor.

It catalyses the reaction (2R)-2,3-dihydroxy-3-methylbutanoate + NADP(+) = (2S)-2-acetolactate + NADPH + H(+). It carries out the reaction (2R,3R)-2,3-dihydroxy-3-methylpentanoate + NADP(+) = (S)-2-ethyl-2-hydroxy-3-oxobutanoate + NADPH + H(+). Its pathway is amino-acid biosynthesis; L-isoleucine biosynthesis; L-isoleucine from 2-oxobutanoate: step 2/4. It participates in amino-acid biosynthesis; L-valine biosynthesis; L-valine from pyruvate: step 2/4. Functionally, involved in the biosynthesis of branched-chain amino acids (BCAA). Catalyzes an alkyl-migration followed by a ketol-acid reduction of (S)-2-acetolactate (S2AL) to yield (R)-2,3-dihydroxy-isovalerate. In the isomerase reaction, S2AL is rearranged via a Mg-dependent methyl migration to produce 3-hydroxy-3-methyl-2-ketobutyrate (HMKB). In the reductase reaction, this 2-ketoacid undergoes a metal-dependent reduction by NADPH to yield (R)-2,3-dihydroxy-isovalerate. This is Ketol-acid reductoisomerase (NADP(+)) from Synechococcus sp. (strain CC9311).